The chain runs to 118 residues: Fluoride-specific ion channel FluC 2 (118 aa).

Transmembrane regions (helical) follow at residues 1–21 (MMEA…RFAI), 33–53 (FPIA…YIIG), 55–75 (GVTT…FTTF), and 93–113 (ILFL…FLGM). 2 residues coordinate Na(+): glycine 70 and threonine 73.

This sequence belongs to the fluoride channel Fluc/FEX (TC 1.A.43) family.

It is found in the cell membrane. It carries out the reaction fluoride(in) = fluoride(out). Na(+) is not transported, but it plays an essential structural role and its presence is essential for fluoride channel function. Fluoride-specific ion channel. Important for reducing fluoride concentration in the cell, thus reducing its toxicity. The protein is Fluoride-specific ion channel FluC 2 of Bacillus cereus (strain ATCC 10987 / NRS 248).